Reading from the N-terminus, the 208-residue chain is Phosphoheptose isomerase (208 aa).

The SIS domain maps to methionine 38–proline 200. Asparagine 53 to glycine 55 is a binding site for substrate. Zn(2+) contacts are provided by histidine 62 and glutamate 66. Substrate is bound by residues glutamate 66, asparagine 95–aspartate 96, serine 121–serine 123, serine 126, and glutamine 173. Zn(2+) contacts are provided by glutamine 173 and histidine 181.

This sequence belongs to the SIS family. GmhA subfamily. Homotetramer. The cofactor is Zn(2+).

The protein localises to the cytoplasm. The catalysed reaction is 2 D-sedoheptulose 7-phosphate = D-glycero-alpha-D-manno-heptose 7-phosphate + D-glycero-beta-D-manno-heptose 7-phosphate. It participates in carbohydrate biosynthesis; D-glycero-D-manno-heptose 7-phosphate biosynthesis; D-glycero-alpha-D-manno-heptose 7-phosphate and D-glycero-beta-D-manno-heptose 7-phosphate from sedoheptulose 7-phosphate: step 1/1. In terms of biological role, catalyzes the isomerization of sedoheptulose 7-phosphate in D-glycero-D-manno-heptose 7-phosphate. In Nitratidesulfovibrio vulgaris (strain DSM 19637 / Miyazaki F) (Desulfovibrio vulgaris), this protein is Phosphoheptose isomerase.